The following is a 35-amino-acid chain: Photosystem II reaction center protein M (35 aa).

The helical transmembrane segment at 5-25 (ILAFIATALFIIIPTAFLLIL) threads the bilayer.

Belongs to the PsbM family. As to quaternary structure, PSII is composed of 1 copy each of membrane proteins PsbA, PsbB, PsbC, PsbD, PsbE, PsbF, PsbH, PsbI, PsbJ, PsbK, PsbL, PsbM, PsbT, PsbX, PsbY, PsbZ, Psb30/Ycf12, at least 3 peripheral proteins of the oxygen-evolving complex and a large number of cofactors. It forms dimeric complexes.

The protein resides in the plastid. It localises to the chloroplast thylakoid membrane. Its function is as follows. One of the components of the core complex of photosystem II (PSII). PSII is a light-driven water:plastoquinone oxidoreductase that uses light energy to abstract electrons from H(2)O, generating O(2) and a proton gradient subsequently used for ATP formation. It consists of a core antenna complex that captures photons, and an electron transfer chain that converts photonic excitation into a charge separation. This subunit is found at the monomer-monomer interface. In Chara vulgaris (Common stonewort), this protein is Photosystem II reaction center protein M.